The following is a 180-amino-acid chain: ATP synthase subunit delta (180 aa).

The protein belongs to the ATPase delta chain family. As to quaternary structure, F-type ATPases have 2 components, F(1) - the catalytic core - and F(0) - the membrane proton channel. F(1) has five subunits: alpha(3), beta(3), gamma(1), delta(1), epsilon(1). CF(0) has four main subunits: a(1), b(1), b'(1) and c(10-14). The alpha and beta chains form an alternating ring which encloses part of the gamma chain. F(1) is attached to F(0) by a central stalk formed by the gamma and epsilon chains, while a peripheral stalk is formed by the delta, b and b' chains.

The protein resides in the cellular thylakoid membrane. Its function is as follows. F(1)F(0) ATP synthase produces ATP from ADP in the presence of a proton or sodium gradient. F-type ATPases consist of two structural domains, F(1) containing the extramembraneous catalytic core and F(0) containing the membrane proton channel, linked together by a central stalk and a peripheral stalk. During catalysis, ATP synthesis in the catalytic domain of F(1) is coupled via a rotary mechanism of the central stalk subunits to proton translocation. Functionally, this protein is part of the stalk that links CF(0) to CF(1). It either transmits conformational changes from CF(0) to CF(1) or is implicated in proton conduction. This chain is ATP synthase subunit delta, found in Prochlorococcus marinus (strain MIT 9215).